The primary structure comprises 228 residues: uncharacterized protein (228 aa).

The N-terminal stretch at 1 to 19 (MYRYTWLLWWITILLRIQQ) is a signal peptide. N41, N93, N100, N128, and N164 each carry an N-linked (GlcNAc...) asparagine; by host glycan. The chain crosses the membrane as a helical span at residues 189-209 (MWIIPLVIVTTIIVLICFKFP).

This sequence belongs to the HHV-5 UL9 family.

It localises to the host membrane. This is an uncharacterized protein from Homo sapiens (Human).